The primary structure comprises 465 residues: Hexokinase-4 (465 aa).

Positions 10 to 454 (AAKKEKVEQI…SGRGAALVSA (445 aa)) constitute a Hexokinase domain. Positions 67–203 (EGSEVGDFLS…DFEMDVVAMV (137 aa)) are hexokinase small subdomain. Residue 78 to 83 (DLGGTN) coordinates ATP. Residues 151–152 (SF), 168–169 (TK), and 204–205 (ND) each bind substrate. Positions 204–443 (NDTVATMISC…CEITFIESEE (240 aa)) are hexokinase large subdomain. T228 contacts ATP. Substrate contacts are provided by N231, E256, and E290. ATP is bound by residues 295–296 (GK), 332–336 (TRFVS), and 411–415 (SVYKL).

The protein belongs to the hexokinase family. Monomer. Interacts with MIDN; the interaction occurs preferentially at low glucose levels and results in inhibition of hexokinase activity. Interacts with GCKR; leading to sequestration in the nucleus.

The protein resides in the cytoplasm. It localises to the nucleus. Its subcellular location is the mitochondrion. It carries out the reaction a D-hexose + ATP = a D-hexose 6-phosphate + ADP + H(+). The enzyme catalyses D-fructose + ATP = D-fructose 6-phosphate + ADP + H(+). The catalysed reaction is D-glucose + ATP = D-glucose 6-phosphate + ADP + H(+). It catalyses the reaction D-mannose + ATP = D-mannose 6-phosphate + ADP + H(+). Its pathway is carbohydrate metabolism; hexose metabolism. It participates in carbohydrate degradation; glycolysis; D-glyceraldehyde 3-phosphate and glycerone phosphate from D-glucose: step 1/4. Its activity is regulated as follows. Subject to allosteric regulation. Low glucose and high fructose-6-phosphate triggers association with the inhibitor GCKR followed by sequestration in the nucleus. Functionally, catalyzes the phosphorylation of hexose, such as D-glucose, D-fructose and D-mannose, to hexose 6-phosphate (D-glucose 6-phosphate, D-fructose 6-phosphate and D-mannose 6-phosphate, respectively). Compared to other hexokinases, has a weak affinity for D-glucose, and is effective only when glucose is abundant. Mainly expressed in pancreatic beta cells and the liver and constitutes a rate-limiting step in glucose metabolism in these tissues. Since insulin secretion parallels glucose metabolism and the low glucose affinity of GCK ensures that it can change its enzymatic activity within the physiological range of glucose concentrations, GCK acts as a glucose sensor in the pancreatic beta cell. In pancreas, plays an important role in modulating insulin secretion. In liver, helps to facilitate the uptake and conversion of glucose by acting as an insulin-sensitive determinant of hepatic glucose usage. Required to provide D-glucose 6-phosphate for the synthesis of glycogen. Mediates the initial step of glycolysis by catalyzing phosphorylation of D-glucose to D-glucose 6-phosphate. The protein is Hexokinase-4 of Homo sapiens (Human).